A 248-amino-acid polypeptide reads, in one-letter code: Probable transcriptional regulatory protein RHE_CH03475 (248 aa).

It belongs to the TACO1 family.

Its subcellular location is the cytoplasm. This Rhizobium etli (strain ATCC 51251 / DSM 11541 / JCM 21823 / NBRC 15573 / CFN 42) protein is Probable transcriptional regulatory protein RHE_CH03475.